The sequence spans 394 residues: Chorismate synthase (394 aa).

Residue R62 coordinates NADP(+). Residues 144 to 146, G307, 322 to 326, and R349 contribute to the FMN site; these read RAS and KPTPT.

This sequence belongs to the chorismate synthase family. As to quaternary structure, homotetramer. The cofactor is FMNH2.

It carries out the reaction 5-O-(1-carboxyvinyl)-3-phosphoshikimate = chorismate + phosphate. Its pathway is metabolic intermediate biosynthesis; chorismate biosynthesis; chorismate from D-erythrose 4-phosphate and phosphoenolpyruvate: step 7/7. Its function is as follows. Catalyzes the anti-1,4-elimination of the C-3 phosphate and the C-6 proR hydrogen from 5-enolpyruvylshikimate-3-phosphate (EPSP) to yield chorismate, which is the branch point compound that serves as the starting substrate for the three terminal pathways of aromatic amino acid biosynthesis. This reaction introduces a second double bond into the aromatic ring system. The polypeptide is Chorismate synthase (Acetivibrio thermocellus (strain ATCC 27405 / DSM 1237 / JCM 9322 / NBRC 103400 / NCIMB 10682 / NRRL B-4536 / VPI 7372) (Clostridium thermocellum)).